Reading from the N-terminus, the 532-residue chain is Phosphoenolpyruvate carboxykinase (ATP) (532 aa).

Positions 60, 200, and 206 each coordinate substrate. Residues Lys-206, His-225, and 242 to 250 (GLSGTGKTT) contribute to the ATP site. Mn(2+)-binding residues include Lys-206 and His-225. Ser-244 contacts substrate. Asp-263 is a Mn(2+) binding site. Residues Glu-291, Arg-327, 443–444 (RI), and Thr-449 each bind ATP. Arg-327 serves as a coordination point for substrate.

Belongs to the phosphoenolpyruvate carboxykinase (ATP) family. Monomer. It depends on Mn(2+) as a cofactor.

It is found in the cytoplasm. It carries out the reaction oxaloacetate + ATP = phosphoenolpyruvate + ADP + CO2. The protein operates within carbohydrate biosynthesis; gluconeogenesis. With respect to regulation, inhibited by p-chloromercuribenzoate. In terms of biological role, involved in gluconeogenesis. Catalyzes the conversion of oxaloacetate (OAA) to phosphoenolpyruvate (PEP) through direct phosphoryl transfer between the nucleoside triphosphate and OAA. In Anaerobiospirillum succiniciproducens, this protein is Phosphoenolpyruvate carboxykinase (ATP).